Here is a 156-residue protein sequence, read N- to C-terminus: MVDILGERHLVTCKGATVEAEAALQNKVVALYFAAARCAPSRDFTPLLCDFYTALVAEARRPAPFEVVFVSADGSSQEMLDFMRELHGAWLALPFHDPYRHELRKRYNVTAIPKLVIVKQNGEVITNKGRKQIRERGLACFQDWVEAADIFQNFSV.

Residues 9 to 147 (HLVTCKGATV…LACFQDWVEA (139 aa)) enclose the Thioredoxin domain.

The protein belongs to the nucleoredoxin family.

Its function is as follows. May be involved in the maintenance of both the function and the viability of sensory neurons, including photoreceptors and olfactory neurons. The protein is Nucleoredoxin-like protein 2 (NXNL2) of Homo sapiens (Human).